The following is a 1518-amino-acid chain: Putative cellulose synthase 2 (1518 aa).

The catalytic stretch occupies residues 1 to 731 (MYGTWFTTGK…EEKLEKQSFV (731 aa)). A run of 3 helical transmembrane segments spans residues 24 to 44 (PVWV…SVRI), 71 to 91 (ITVF…VWRL), and 105 to 125 (LAVL…LSYF). The segment at 144–237 (QWPSVDVFVP…FAVIFDCDHV (94 aa)) is catalytic subdomain A. D186 is a catalytic residue. Substrate contacts are provided by D233 and D235. Positions 314–374 (EAVMGIGGFA…GQRVRWARGM (61 aa)) are catalytic subdomain B. Residue D330 is part of the active site. Helical transmembrane passes span 404–424 (FLFA…LFLG), 427–447 (IIAA…FHSV), 465–485 (IYET…LLQP), 514–534 (ILAG…VWQF), and 543–563 (FILN…SIAV). One can recognise a PilZ domain in the interval 569 to 668 (QTRNAPRVSV…ERQVVSMVFG (100 aa)). A cyclic di-GMP binding domain region spans residues 732 to 1518 (LKPVPRSARH…IARDDLTGEL (787 aa)). The disordered stretch occupies residues 765–785 (APSPDQSGVTAETPFGDSNTG). The segment covering 768-785 (PDQSGVTAETPFGDSNTG) has biased composition (polar residues). Residues 1481–1501 (ALYLAGLAGAGLAALGVWAWL) traverse the membrane as a helical segment.

It in the N-terminal section; belongs to the glycosyltransferase 2 family. This sequence in the C-terminal section; belongs to the AcsB/BcsB family.

It localises to the cell inner membrane. The catalysed reaction is [(1-&gt;4)-beta-D-glucosyl](n) + UDP-alpha-D-glucose = [(1-&gt;4)-beta-D-glucosyl](n+1) + UDP + H(+). It participates in glycan metabolism; bacterial cellulose biosynthesis. The chain is Putative cellulose synthase 2 (bcsABII-A) from Komagataeibacter xylinus (Gluconacetobacter xylinus).